The following is a 753-amino-acid chain: Cell cycle progression protein 1 (753 aa).

The Cytoplasmic portion of the chain corresponds to 1-218; sequence MSESSSDSDS…KRHFSRGLNK (218 aa). The tract at residues 1 to 307 is interaction with MCF2L and SRC; it reads MSESSSDSDS…QKKNLAAENQ (307 aa). The disordered stretch occupies residues 57–211; sequence HGGEESSANN…EPSKEPSKRH (155 aa). Composition is skewed to polar residues over residues 62-78 and 122-138; these read SSAN…LSSM and QEVT…LNMG. Basic residues predominate over residues 176–185; it reads PRRRRNRKKT. Position 187 is a phosphoserine (serine 187). The segment covering 190 to 201 has biased composition (acidic residues); sequence ESEEPPLAEPED. A helical; Signal-anchor for type II membrane protein transmembrane segment spans residues 219 to 239; the sequence is CVILALVIAVSMGFGHFYGTI. At 240-753 the chain is on the lumenal side; that stretch reads QIQKQLVRKT…YIKPCYYNSF (514 aa). Residues 298 to 449 adopt a coiled-coil conformation; that stretch reads QKKNLAAENQ…EQQRSDLWER (152 aa). A compositionally biased stretch (basic and acidic residues) spans 457 to 467; it reads QHGKQETDGRK. A disordered region spans residues 457–484; that stretch reads QHGKQETDGRKRGSRGSHRAKSKSKETF. Basic residues predominate over residues 468–478; that stretch reads RGSRGSHRAKS. Residues 503-529 are a coiled coil; it reads VRHHKEKIKQAKEAVKENLKKFSDSVK. Residues 553–563 show a composition bias toward basic and acidic residues; the sequence is APKEAATEKTR. A disordered region spans residues 553 to 606; the sequence is APKEAATEKTRTAYSYSSYSQQEAPNQNQNCRRPSAQRDGGREKPSHSEEIRKN. A compositionally biased stretch (polar residues) spans 573-584; it reads QQEAPNQNQNCR. Residues 591 to 605 are compositionally biased toward basic and acidic residues; it reads DGGREKPSHSEEIRK.

It belongs to the CCPG1 family. Interacts with MCF2L. May interact with MCF2, ARHGEF1, BCR, VAV1 and FGD1, but not with TIAM1. Interacts with GTP-bound CDC42 and SRC.

The protein localises to the cytoplasmic granule membrane. Functionally, acts as an assembly platform for Rho protein signaling complexes. Limits guanine nucleotide exchange activity of MCF2L toward RHOA, which results in an inhibition of both its transcriptional activation ability and its transforming activity. Does not inhibit activity of MCF2L toward CDC42, or activity of MCF2 toward either RHOA or CDC42. May be involved in cell cycle regulation. The protein is Cell cycle progression protein 1 (Ccpg1) of Mus musculus (Mouse).